The following is a 65-amino-acid chain: MLIAFQGAVFALVLLSFVLIVAVPVALASPGEWERSQRLIYAGAALWTSLIIVIGVLDSVVANQA.

A run of 2 helical transmembrane segments spans residues 8 to 28 (AVFA…VALA) and 41 to 61 (YAGA…DSVV).

It belongs to the PsbZ family. PSII is composed of 1 copy each of membrane proteins PsbA, PsbB, PsbC, PsbD, PsbE, PsbF, PsbH, PsbI, PsbJ, PsbK, PsbL, PsbM, PsbT, PsbX, PsbY, PsbZ, Psb30/Ycf12, at least 3 peripheral proteins of the oxygen-evolving complex and a large number of cofactors. It forms dimeric complexes.

It localises to the plastid. The protein localises to the cyanelle thylakoid membrane. Functionally, may control the interaction of photosystem II (PSII) cores with the light-harvesting antenna, regulates electron flow through the 2 photosystem reaction centers. PSII is a light-driven water plastoquinone oxidoreductase, using light energy to abstract electrons from H(2)O, generating a proton gradient subsequently used for ATP formation. In Cyanophora paradoxa, this protein is Photosystem II reaction center protein Z.